The chain runs to 289 residues: 4-hydroxybenzoate octaprenyltransferase (289 aa).

A run of 9 helical transmembrane segments spans residues 19–39 (IPILLILWPTLTALVLASHGL), 42–62 (ISYLVIFTIGVVVMRTVGCII), 85–105 (GQLSIKNAIWLCISLTLVAFI), 107–127 (VLFLNLYTILLSFVALFLAIL), 134–154 (FFAIPQLILGLAFNFGIFMAF), 165–185 (AWIFYIATICWTIAYDTIYAL), 211–231 (ILLFNFLSLLLLIILGIYCDF), 233–253 (SFFYLGVVICSLFFVRNYFLY), and 265–285 (FSANHWIGLIIFIIAVIQYII).

It belongs to the UbiA prenyltransferase family. Mg(2+) serves as cofactor.

The protein resides in the cell inner membrane. It carries out the reaction all-trans-octaprenyl diphosphate + 4-hydroxybenzoate = 4-hydroxy-3-(all-trans-octaprenyl)benzoate + diphosphate. It participates in cofactor biosynthesis; ubiquinone biosynthesis. Its function is as follows. Catalyzes the prenylation of para-hydroxybenzoate (PHB) with an all-trans polyprenyl group. Mediates the second step in the final reaction sequence of ubiquinone-8 (UQ-8) biosynthesis, which is the condensation of the polyisoprenoid side chain with PHB, generating the first membrane-bound Q intermediate 3-octaprenyl-4-hydroxybenzoate. The sequence is that of 4-hydroxybenzoate octaprenyltransferase from Francisella tularensis subsp. holarctica (strain FTNF002-00 / FTA).